The chain runs to 133 residues: MSLTLRVLAPDQSVFDGTAEEVILPSTTGLIGILPGHISLVTALDIGVMRVRANGAWNSIALMGGFAEVEADDVTVLVNGAELGKSIDATTAEAELEQAKAKVSQMEGQEPSTEKIKAQQNFNRARARVQATK.

The disordered stretch occupies residues V103 to K133.

Belongs to the ATPase epsilon chain family. In terms of assembly, F-type ATPases have 2 components, CF(1) - the catalytic core - and CF(0) - the membrane proton channel. CF(1) has five subunits: alpha(3), beta(3), gamma(1), delta(1), epsilon(1). CF(0) has three main subunits: a, b and c.

The protein resides in the cellular thylakoid membrane. Functionally, produces ATP from ADP in the presence of a proton gradient across the membrane. The protein is ATP synthase epsilon chain of Prochlorococcus marinus (strain MIT 9313).